We begin with the raw amino-acid sequence, 310 residues long: tRNA-dihydrouridine(16) synthase (310 aa).

Residues 7-9 (PMQ) and Gln68 contribute to the FMN site. Cys98 functions as the Proton donor in the catalytic mechanism. FMN-binding positions include Lys139, 200–202 (NGE), and 224–225 (GR).

This sequence belongs to the Dus family. DusC subfamily. It depends on FMN as a cofactor.

It carries out the reaction 5,6-dihydrouridine(16) in tRNA + NADP(+) = uridine(16) in tRNA + NADPH + H(+). It catalyses the reaction 5,6-dihydrouridine(16) in tRNA + NAD(+) = uridine(16) in tRNA + NADH + H(+). In terms of biological role, catalyzes the synthesis of 5,6-dihydrouridine (D), a modified base found in the D-loop of most tRNAs, via the reduction of the C5-C6 double bond in target uridines. Specifically modifies U16 in tRNAs. The chain is tRNA-dihydrouridine(16) synthase from Haemophilus influenzae (strain ATCC 51907 / DSM 11121 / KW20 / Rd).